Consider the following 73-residue polypeptide: MSKLGVLLTICLLLFPLTALPMDGDQSVDRPAERMQDDISSGQHPLFNQKRRCCGEGASCPRYFRNSQICSCC.

The N-terminal stretch at 1-19 (MSKLGVLLTICLLLFPLTA) is a signal peptide. The propeptide occupies 20–51 (LPMDGDQSVDRPAERMQDDISSGQHPLFNQKR). Intrachain disulfides connect cysteine 53-cysteine 72, cysteine 54-cysteine 70, and cysteine 60-cysteine 73.

It belongs to the conotoxin M superfamily. In terms of tissue distribution, expressed by the venom duct.

The protein resides in the secreted. Its function is as follows. Shows a paralytic effect in fish. In Conus consors (Singed cone), this protein is Conotoxin CnIIIF.